The sequence spans 198 residues: 8-oxoguanine DNA glycosylase/AP lyase (198 aa).

Active-site residues include K122 and D140.

Belongs to the type-2 OGG1 family. In terms of assembly, monomer.

The enzyme catalyses 2'-deoxyribonucleotide-(2'-deoxyribose 5'-phosphate)-2'-deoxyribonucleotide-DNA = a 3'-end 2'-deoxyribonucleotide-(2,3-dehydro-2,3-deoxyribose 5'-phosphate)-DNA + a 5'-end 5'-phospho-2'-deoxyribonucleoside-DNA + H(+). Functionally, catalyzes the excision of an oxidatively damaged form of guanine (7,8-dihydro-8-oxoguanine = 8-oxoG) from DNA. Also cleaves the DNA backbone at apurinic/apyrimidinic sites (AP sites). Efficiently cleaves oligomers containing 8-oxoG:C and 8-oxoG:G base pairs, and is less effective on oligomers containing 8-oxoG:T and 8-oxoG:A mispairs. This is 8-oxoguanine DNA glycosylase/AP lyase from Archaeoglobus fulgidus (strain ATCC 49558 / DSM 4304 / JCM 9628 / NBRC 100126 / VC-16).